We begin with the raw amino-acid sequence, 345 residues long: NADH-ubiquinone oxidoreductase chain 2 (345 aa).

Transmembrane regions (helical) follow at residues 1-21 (MNPI…VITM), 25-45 (NLML…PMLI), 56-76 (ATKY…AIVL), 92-114 (GLIL…FHFW), 149-171 (LNST…GGLN), 178-198 (IMAY…PYNP), 200-220 (LTLL…MALM), 241-261 (LTMI…TGFL), 274-294 (NCLI…FFYT), and 324-344 (LMFS…PQLI).

It belongs to the complex I subunit 2 family. Core subunit of respiratory chain NADH dehydrogenase (Complex I) which is composed of 45 different subunits. Interacts with TMEM242.

The protein resides in the mitochondrion inner membrane. The enzyme catalyses a ubiquinone + NADH + 5 H(+)(in) = a ubiquinol + NAD(+) + 4 H(+)(out). Functionally, core subunit of the mitochondrial membrane respiratory chain NADH dehydrogenase (Complex I) which catalyzes electron transfer from NADH through the respiratory chain, using ubiquinone as an electron acceptor. Essential for the catalytic activity and assembly of complex I. This chain is NADH-ubiquinone oxidoreductase chain 2, found in Mus musculus (Mouse).